Consider the following 181-residue polypeptide: Protein Ves (181 aa).

The protein belongs to the Ves family.

In Cronobacter sakazakii (strain ATCC BAA-894) (Enterobacter sakazakii), this protein is Protein Ves.